The primary structure comprises 61 residues: Beta-defensin 13 (61 aa).

Residues 1-21 (MRLLYLLFAAVMLLFLQAVPA) form the signal peptide. Positions 24, 40, 44, 51, 53, 54, 58, and 61 each coordinate a 1,2-diacyl-sn-glycero-3-phosphate. 3 disulfides stabilise this stretch: C31-C59, C38-C52, and C42-C60.

Belongs to the beta-defensin family. Monomeric. Forms multimeric, probably including tetrameric, complexes in the presence of phospholipid phosphatidic acid.

The protein resides in the secreted. Exhibits antimicrobial activity against fungi. Antimicrobial activity in a pH-dependent manner against the yeast C.albicans; activity is salt tolerant and retains antifungal activity in NaCl concentrations of 100mM. Permeabilizes C.albicans cell membranes via targeting plasma membrane phospholipid phosphatidic acid. The protein is Beta-defensin 13 of Crocodylus porosus (Saltwater crocodile).